The chain runs to 189 residues: Probable nicotinate-nucleotide adenylyltransferase (189 aa).

Belongs to the NadD family.

It catalyses the reaction nicotinate beta-D-ribonucleotide + ATP + H(+) = deamido-NAD(+) + diphosphate. Its pathway is cofactor biosynthesis; NAD(+) biosynthesis; deamido-NAD(+) from nicotinate D-ribonucleotide: step 1/1. Functionally, catalyzes the reversible adenylation of nicotinate mononucleotide (NaMN) to nicotinic acid adenine dinucleotide (NaAD). The sequence is that of Probable nicotinate-nucleotide adenylyltransferase from Hydrogenobaculum sp. (strain Y04AAS1).